The following is a 160-amino-acid chain: Biogenesis of lysosome-related organelles complex 1 subunit 5 (160 aa).

Belongs to the BLOC1S5 family. Component of the biogenesis of lysosome-related organelles complex-1 (BLOC-1) composed of Blos1, Blos2, Blos3, Blos4, Dysb, Muted, Pldn and Snapin.

In terms of biological role, component of the biogenesis of lysosome-related organelles complex-1 (BLOC-1) involved in pigment granule biogenesis. The polypeptide is Biogenesis of lysosome-related organelles complex 1 subunit 5 (Drosophila melanogaster (Fruit fly)).